A 210-amino-acid polypeptide reads, in one-letter code: 3,4-dihydroxy-2-butanone 4-phosphate synthase (210 aa).

D-ribulose 5-phosphate-binding positions include 33 to 34 (RE), Asp38, 146 to 150 (RRGHT), and Glu170. Glu34 is a Mg(2+) binding site. His149 contributes to the Mg(2+) binding site.

This sequence belongs to the DHBP synthase family. Homodimer. It depends on Mg(2+) as a cofactor. Mn(2+) serves as cofactor.

The enzyme catalyses D-ribulose 5-phosphate = (2S)-2-hydroxy-3-oxobutyl phosphate + formate + H(+). It participates in cofactor biosynthesis; riboflavin biosynthesis; 2-hydroxy-3-oxobutyl phosphate from D-ribulose 5-phosphate: step 1/1. Functionally, catalyzes the conversion of D-ribulose 5-phosphate to formate and 3,4-dihydroxy-2-butanone 4-phosphate. The chain is 3,4-dihydroxy-2-butanone 4-phosphate synthase from Chromobacterium violaceum (strain ATCC 12472 / DSM 30191 / JCM 1249 / CCUG 213 / NBRC 12614 / NCIMB 9131 / NCTC 9757 / MK).